Consider the following 331-residue polypeptide: L-lactate dehydrogenase A chain (331 aa).

NAD(+) is bound by residues 29–57 and R98; that span reads GMVG…MEDK. 3 residues coordinate substrate: R105, N137, and R168. Position 137 (N137) interacts with NAD(+). Residue H192 is the Proton acceptor of the active site. Residue T247 coordinates substrate.

This sequence belongs to the LDH/MDH superfamily. LDH family. As to quaternary structure, homotetramer.

It is found in the cytoplasm. It catalyses the reaction (S)-lactate + NAD(+) = pyruvate + NADH + H(+). Its pathway is fermentation; pyruvate fermentation to lactate; (S)-lactate from pyruvate: step 1/1. Functionally, interconverts simultaneously and stereospecifically pyruvate and lactate with concomitant interconversion of NADH and NAD(+). The chain is L-lactate dehydrogenase A chain (ldha) from Harpagifer antarcticus (Antarctic spiny plunderfish).